Here is a 165-residue protein sequence, read N- to C-terminus: uncharacterized protein (165 aa).

Positions 22–34 are enriched in polar residues; it reads QQANQENMSSRTD. Positions 22–45 are disordered; that stretch reads QQANQENMSSRTDSPIPPFGESEQ.

This is an uncharacterized protein from Homo sapiens (Human).